A 202-amino-acid chain; its full sequence is NADH-quinone oxidoreductase subunit J (202 aa).

Transmembrane regions (helical) follow at residues 3 to 23 (VFVF…LMVV), 31 to 51 (AVLW…LMGA), 53 to 73 (FVAM…FLFV), 93 to 113 (PVGG…LMVW), and 146 to 166 (LYLF…AILL).

The protein belongs to the complex I subunit 6 family. As to quaternary structure, NDH-1 is composed of 14 different subunits. Subunits NuoA, H, J, K, L, M, N constitute the membrane sector of the complex.

It localises to the cellular chromatophore membrane. It catalyses the reaction a quinone + NADH + 5 H(+)(in) = a quinol + NAD(+) + 4 H(+)(out). In terms of biological role, NDH-1 shuttles electrons from NADH, via FMN and iron-sulfur (Fe-S) centers, to quinones in the respiratory chain. The immediate electron acceptor for the enzyme in this species is believed to be ubiquinone. Couples the redox reaction to proton translocation (for every two electrons transferred, four hydrogen ions are translocated across the cytoplasmic membrane), and thus conserves the redox energy in a proton gradient. The protein is NADH-quinone oxidoreductase subunit J (nuoJ) of Rhodobacter capsulatus (Rhodopseudomonas capsulata).